A 364-amino-acid polypeptide reads, in one-letter code: Fructose-bisphosphate aldolase A (364 aa).

Tyrosine 5 bears the Phosphotyrosine mark. At threonine 9 the chain carries Phosphothreonine. A phosphoserine mark is found at serine 36 and serine 39. Lysine 42 is subject to N6-acetyllysine; alternate. Lysine 42 participates in a covalent cross-link: Glycyl lysine isopeptide (Lys-Gly) (interchain with G-Cter in SUMO1); alternate. Lysine 42 is covalently cross-linked (Glycyl lysine isopeptide (Lys-Gly) (interchain with G-Cter in SUMO2); alternate). A beta-D-fructose 1,6-bisphosphate-binding site is contributed by arginine 43. Serine 46 bears the Phosphoserine mark. An N6-(2-hydroxyisobutyryl)lysine modification is found at lysine 99. Lysine 108 bears the N6-acetyllysine mark. Lysine 111 is subject to N6-acetyllysine; alternate. Lysine 111 carries the N6-malonyllysine; alternate modification. Residue serine 132 is modified to Phosphoserine. N6-(2-hydroxyisobutyryl)lysine is present on lysine 147. The Proton acceptor role is filled by glutamate 188. Lysine 230 serves as the catalytic Schiff-base intermediate with dihydroxyacetone-P. A Phosphoserine modification is found at serine 272. Residues 272-274 (SGG), serine 301, and arginine 304 contribute to the beta-D-fructose 1,6-bisphosphate site. At lysine 312 the chain carries N6-malonyllysine. N6-acetyllysine is present on lysine 330.

This sequence belongs to the class I fructose-bisphosphate aldolase family. Homotetramer. Interacts with SNX9 and WAS. Interacts with FBP2; the interaction blocks FBP2 inhibition by physiological concentrations of AMP and reduces inhibition by Ca(2+).

It is found in the cytoplasm. Its subcellular location is the myofibril. The protein localises to the sarcomere. It localises to the i band. The protein resides in the m line. It carries out the reaction beta-D-fructose 1,6-bisphosphate = D-glyceraldehyde 3-phosphate + dihydroxyacetone phosphate. The protein operates within carbohydrate degradation; glycolysis; D-glyceraldehyde 3-phosphate and glycerone phosphate from D-glucose: step 4/4. Catalyzes the reversible conversion of beta-D-fructose 1,6-bisphosphate (FBP) into two triose phosphate and plays a key role in glycolysis and gluconeogenesis. In addition, may also function as scaffolding protein. The protein is Fructose-bisphosphate aldolase A of Homo sapiens (Human).